A 60-amino-acid chain; its full sequence is UPF0509 protein ESA_01586 (60 aa).

This sequence belongs to the UPF0509 family.

In Cronobacter sakazakii (strain ATCC BAA-894) (Enterobacter sakazakii), this protein is UPF0509 protein ESA_01586.